The primary structure comprises 212 residues: Probable octanoyltransferase (212 aa).

One can recognise a BPL/LPL catalytic domain in the interval 28-199 (GVSEEMILVT…NLETLLQRQE (172 aa)). Residues 66–73 (RGGDATYH), 130–132 (SVG), and 143–145 (GVA) each bind substrate. The active-site Acyl-thioester intermediate is the Cys-161.

The protein belongs to the LipB family.

Its subcellular location is the cytoplasm. The catalysed reaction is octanoyl-[ACP] + L-lysyl-[protein] = N(6)-octanoyl-L-lysyl-[protein] + holo-[ACP] + H(+). Its pathway is protein modification; protein lipoylation via endogenous pathway; protein N(6)-(lipoyl)lysine from octanoyl-[acyl-carrier-protein]: step 1/2. Catalyzes the transfer of endogenously produced octanoic acid from octanoyl-acyl-carrier-protein onto the lipoyl domains of lipoate-dependent enzymes. Lipoyl-ACP can also act as a substrate although octanoyl-ACP is likely to be the physiological substrate. The chain is Probable octanoyltransferase from Pyrobaculum arsenaticum (strain DSM 13514 / JCM 11321 / PZ6).